A 200-amino-acid chain; its full sequence is Imidazoleglycerol-phosphate dehydratase (200 aa).

The protein belongs to the imidazoleglycerol-phosphate dehydratase family.

It localises to the cytoplasm. It catalyses the reaction D-erythro-1-(imidazol-4-yl)glycerol 3-phosphate = 3-(imidazol-4-yl)-2-oxopropyl phosphate + H2O. The protein operates within amino-acid biosynthesis; L-histidine biosynthesis; L-histidine from 5-phospho-alpha-D-ribose 1-diphosphate: step 6/9. In Leifsonia xyli subsp. xyli (strain CTCB07), this protein is Imidazoleglycerol-phosphate dehydratase.